A 260-amino-acid polypeptide reads, in one-letter code: Ribosomal RNA small subunit methyltransferase J (260 aa).

S-adenosyl-L-methionine is bound by residues 125–126 (ER) and aspartate 179.

This sequence belongs to the methyltransferase superfamily. RsmJ family.

It is found in the cytoplasm. It carries out the reaction guanosine(1516) in 16S rRNA + S-adenosyl-L-methionine = N(2)-methylguanosine(1516) in 16S rRNA + S-adenosyl-L-homocysteine + H(+). Its function is as follows. Specifically methylates the guanosine in position 1516 of 16S rRNA. This is Ribosomal RNA small subunit methyltransferase J from Pseudomonas entomophila (strain L48).